The following is a 288-amino-acid chain: Dysbindin protein homolog (288 aa).

Residues 147 to 239 (AQLQNSSQVL…QRERQAVFDD (93 aa)) are a coiled coil.

This sequence belongs to the dysbindin family. Component of the biogenesis of lysosome-related organelles complex-1 (BLOC-1) composed of Blos1, Blos2, Blos3, Blos4, Dysb, Muted, Pldn and Snapin. Interacts with Pldn and Snapin.

Functionally, component of the biogenesis of lysosome-related organelles complex-1 (BLOC-1) involved in pigment granule biogenesis and membrane trafficking in synapses. In response to high synaptic activity at neuromuscular junctions, stabilizes Pldn protein levels and, together with Pldn, plays a role in promoting efficient synaptic vesicle recycling and re-formation through early endosomes. The protein is Dysbindin protein homolog of Drosophila melanogaster (Fruit fly).